The chain runs to 306 residues: RNA pseudouridylate synthase domain-containing protein 1 (306 aa).

The residue at position 1 (Met1) is an N-acetylmethionine. Asp67 is an active-site residue. Residues 255 to 290 form a disordered region; it reads RTDPDPDPMSGGPRPCSPSTPQPRPGRPPPETEAQR. Residues 269–285 show a composition bias toward pro residues; that stretch reads PCSPSTPQPRPGRPPPE.

Belongs to the pseudouridine synthase RluA family.

The polypeptide is RNA pseudouridylate synthase domain-containing protein 1 (Rpusd1) (Mus musculus (Mouse)).